The following is a 184-amino-acid chain: Large ribosomal subunit protein uL5c (184 aa).

It belongs to the universal ribosomal protein uL5 family. In terms of assembly, part of the 50S ribosomal subunit; contacts the 5S rRNA.

Its subcellular location is the plastid. The protein resides in the chloroplast. Binds 5S rRNA, forms part of the central protuberance of the 50S subunit. The chain is Large ribosomal subunit protein uL5c (rpl5) from Zygnema circumcarinatum (Green alga).